The following is a 198-amino-acid chain: tRNA (pseudouridine(54)-N(1))-methyltransferase (198 aa).

Residues leucine 130, glycine 153, 176 to 181 (LSPLEL), and cysteine 186 contribute to the S-adenosyl-L-methionine site.

Belongs to the methyltransferase superfamily. TrmY family. In terms of assembly, homodimer.

The protein localises to the cytoplasm. It catalyses the reaction pseudouridine(54) in tRNA + S-adenosyl-L-methionine = N(1)-methylpseudouridine(54) in tRNA + S-adenosyl-L-homocysteine + H(+). Functionally, specifically catalyzes the N1-methylation of pseudouridine at position 54 (Psi54) in tRNAs. The protein is tRNA (pseudouridine(54)-N(1))-methyltransferase of Methanococcus maripaludis (strain C7 / ATCC BAA-1331).